Consider the following 383-residue polypeptide: Chaperone protein DnaJ (383 aa).

The region spanning 6 to 71 is the J domain; that stretch reads DYYEVLGVSK…QKRSQYDQFG (66 aa). A CR-type zinc finger spans residues 141–223; the sequence is GVEKKVKVKK…CKGEGVEIGE (83 aa). Positions 154, 157, 171, 174, 197, 200, 211, and 214 each coordinate Zn(2+). CXXCXGXG motif repeat units follow at residues 154–161, 171–178, 197–204, and 211–218; these read CSKCRGDG, CQTCHGTG, CPTCHGEG, and CSKCKGEG.

This sequence belongs to the DnaJ family. In terms of assembly, homodimer. It depends on Zn(2+) as a cofactor.

It localises to the cytoplasm. In terms of biological role, participates actively in the response to hyperosmotic and heat shock by preventing the aggregation of stress-denatured proteins and by disaggregating proteins, also in an autonomous, DnaK-independent fashion. Unfolded proteins bind initially to DnaJ; upon interaction with the DnaJ-bound protein, DnaK hydrolyzes its bound ATP, resulting in the formation of a stable complex. GrpE releases ADP from DnaK; ATP binding to DnaK triggers the release of the substrate protein, thus completing the reaction cycle. Several rounds of ATP-dependent interactions between DnaJ, DnaK and GrpE are required for fully efficient folding. Also involved, together with DnaK and GrpE, in the DNA replication of plasmids through activation of initiation proteins. The polypeptide is Chaperone protein DnaJ (Porphyromonas gingivalis (strain ATCC BAA-308 / W83)).